The sequence spans 459 residues: Glycosyl hydrolase family 109 protein 1 (459 aa).

A signal peptide (tat-type signal) is located at residues 1–31; the sequence is MHNIHRRHFLKAAGAVTAGLVTANIALNANA. NAD(+) is bound by residues 64–65, aspartate 86, 135–138, 155–156, and asparagine 184; these read ER, WEWH, and EV. Residues tyrosine 213, arginine 232, 244 to 247, and tyrosine 326 each bind substrate; that span reads YPTH. Tyrosine 244 serves as a coordination point for NAD(+).

This sequence belongs to the Gfo/Idh/MocA family. Glycosyl hydrolase 109 subfamily. It depends on NAD(+) as a cofactor. In terms of processing, predicted to be exported by the Tat system. The position of the signal peptide cleavage has not been experimentally proven.

In terms of biological role, glycosidase. The protein is Glycosyl hydrolase family 109 protein 1 of Shewanella sp. (strain MR-7).